The following is a 496-amino-acid chain: Cyclin-dependent kinase 16 (496 aa).

Residues 1 to 97 form a disordered region; the sequence is MDRMKKIKRQ…TSSDEVQSPV (97 aa). Serine 12 is modified (phosphoserine; by BRSK2). Residues serine 36, serine 42, serine 64, serine 65, serine 78, serine 82, and serine 89 each carry the phosphoserine modification. Positions 69–78 are enriched in basic and acidic residues; the sequence is IVHEDLKMGS. Residues 83-93 are compositionally biased toward polar residues; that stretch reads DQASATSSDEV. Serine 95 carries the post-translational modification Phosphoserine; by CDK5. 6 positions are modified to phosphoserine: serine 110, serine 119, serine 138, serine 146, serine 153, and serine 155. In terms of domain architecture, Protein kinase spans 165–446; it reads YIKLDKLGEG…AEDAMKHPFF (282 aa). Residues 171–179 and lysine 194 each bind ATP; that span reads LGEGTYATV. Threonine 175 carries the phosphothreonine modification. The Proton acceptor role is filled by aspartate 286. Threonine 380 carries the post-translational modification Phosphothreonine. A phosphoserine mark is found at serine 391, serine 478, and serine 480.

It belongs to the protein kinase superfamily. CMGC Ser/Thr protein kinase family. CDC2/CDKX subfamily. In terms of assembly, found in a complex containing CABLES1, CDK17 and TDRD7. Interacts with BRSK2. Identified in a complex with NSF, syntaxin-1, synaptotagmin, SYN1, SYP and CDK5R1. Interacts with YWHAH, YWHAQ and YWHAZ. Interacts with CCNY; this interaction increases the CDK16 kinase activity. Interacts with CCNYL1; this interaction mutually increases the stability of CDK16 and CCNYL1 and increases the kinase activity of CDK16. Interacts with NSF. Post-translationally, phosphorylation of CDK16 is essential for the binding of CCNY, but also essential for the regulation of CDK16 kinase activity. Phosphorylation of CDK16 is essential for the binding of CCNYl1, but also essential for the regulation of CDK16 kinase activity. Ser-146 and Ser-153 are the most critical sites for the binding of CCNYL1 and for modulating CDK16 kinase activity. Phosphorylation at Ser-153 inhibits kinase activity. Detected in pancreas islets (at protein level). Detected in brain and pancreas.

It is found in the cytoplasm. Its subcellular location is the cytoplasmic vesicle. The protein resides in the secretory vesicle. The protein localises to the cell membrane. It localises to the synapse. It is found in the synaptosome. It carries out the reaction L-seryl-[protein] + ATP = O-phospho-L-seryl-[protein] + ADP + H(+). The enzyme catalyses L-threonyl-[protein] + ATP = O-phospho-L-threonyl-[protein] + ADP + H(+). Functionally, protein kinase that plays a role in vesicle-mediated transport processes and exocytosis. Regulates GH1 release by brain neurons. Phosphorylates NSF, and thereby regulates NSF oligomerization. Required for normal spermatogenesis. Regulates neuron differentiation and dendrite development. Plays a role in the regulation of insulin secretion in response to changes in blood glucose levels. Can phosphorylate CCNY at 'Ser-336' (in vitro). In Homo sapiens (Human), this protein is Cyclin-dependent kinase 16 (CDK16).